A 529-amino-acid polypeptide reads, in one-letter code: E3 ubiquitin-protein ligase arih1 (529 aa).

2 disordered regions span residues 1–29 (MDSD…HEDE) and 46–69 (ERAG…EEDE). Residues 51–64 (CGEGGGSALGPGPG) are compositionally biased toward gly residues. The UBA-like stretch occupies residues 77 to 125 (TAEQILQHMVECIREVNEVIQNPATITRILLSHFNWDKEKLMERYFDGN). The TRIAD supradomain stretch occupies residues 154–365 (LDMPCQICYL…SAWYNCNRYN (212 aa)). Cys158, Cys161, Cys175, His177, Cys180, Cys183, Cys203, Cys208, Cys248, Cys253, Cys269, Cys271, Cys276, Cys279, His284, Cys289, Cys316, and Cys319 together coordinate Zn(2+). The RING-type 1 zinc-finger motif lies at 158–208 (CQICYLNYPNSYFTGLECGHKFCMQCWGEYLTTKIIEEGMGQTISCPAHGC). The segment at 228–289 (LKYQHLITNS…GENWHDPVKC (62 aa)) adopts an IBR-type zinc-finger fold. The RING-type 2; atypical zinc-finger motif lies at 316–347 (CPKCHVTIEKDGGCNHMVCRNQNCKAEFCWVC). Cys329 is an active-site residue. The Zn(2+) site is built by Cys334, Cys339, Cys344, Cys347, His354, and Cys361. Residues 380–529 (RAALQRYLFY…EKDLWEYIED (150 aa)) are ariadne domain.

It belongs to the RBR family. Ariadne subfamily. Interacts (via the first RING-type zinc finger) with ube2l3. Associates with cullin-RING ubiquitin ligase (CRL) complexes containing neddylated cullin.

The protein resides in the cytoplasm. Its subcellular location is the nucleus. It carries out the reaction [E2 ubiquitin-conjugating enzyme]-S-ubiquitinyl-L-cysteine + [acceptor protein]-L-lysine = [E2 ubiquitin-conjugating enzyme]-L-cysteine + [acceptor protein]-N(6)-ubiquitinyl-L-lysine.. It functions in the pathway protein modification; protein ubiquitination. Its activity is regulated as follows. Autoinhibited by the ariadne domain, which masks the second RING-type zinc finger that contains the active site and inhibits the E3 activity. Inhibition is relieved upon binding to neddylated cullin-RING ubiquitin ligase complexes, which activate the E3 ligase activity of ARIH1. In terms of biological role, E3 ubiquitin-protein ligase, which catalyzes ubiquitination of target proteins together with ubiquitin-conjugating enzyme E2 ube2l3. Acts as an atypical E3 ubiquitin-protein ligase by working together with cullin-RING ubiquitin ligase (CRL) complexes and initiating ubiquitination of CRL substrates: associates with CRL complexes and specifically mediates addition of the first ubiquitin on CRLs targets. The initial ubiquitin is then elongated. E3 ubiquitin-protein ligase activity is activated upon binding to neddylated cullin-RING ubiquitin ligase complexes. The chain is E3 ubiquitin-protein ligase arih1 (arih1) from Xenopus laevis (African clawed frog).